The following is a 198-amino-acid chain: Thymidine kinase (198 aa).

ATP-binding positions include 9–16 (STMNAGKS) and 87–90 (DEAQ). The active-site Proton acceptor is the Glu-88. Residues Cys-145, Cys-147, Cys-182, and His-185 each contribute to the Zn(2+) site.

This sequence belongs to the thymidine kinase family. As to quaternary structure, homotetramer.

The protein localises to the cytoplasm. It carries out the reaction thymidine + ATP = dTMP + ADP + H(+). The polypeptide is Thymidine kinase (Ruegeria pomeroyi (strain ATCC 700808 / DSM 15171 / DSS-3) (Silicibacter pomeroyi)).